We begin with the raw amino-acid sequence, 462 residues long: MLTVLAFVFAIAVLIVVHELGHYSVARLCGVKVLRFSVGFGKVLFRRVGRGPDRTEWTLCAIPLGGYVKMLGESARDPERDPPIPPEDLPRTFDHQPVYKRFAIVAAGPVFNFLLAIALYALLAWVGAQEPLPILGAPPPGSIAAQADLRAKDRVVAVGTDEEAPTPVRAWSDVRMRLYEAGIGGRDAIVQVRGADGAERTVRLRELPSAARSPQVDVIEQVGLRLLGGPVTIAEVLPGSAGERAGLRRGDQIVRFAGQPADQASDLIRWIRAMPEQNASIDILRDGLPMTLPVRLGADADSANPGGPKLGKLGAQLSQHVETELIRDEPVHALGHAMREVWRTSMLSLKVLGKMIVGQASLQNLSGPITVADFAGKAASLGWQSFVAFLALISVSLGVLNLLPVPVLDGGHLLYYCVEFLTGKPVPESWQAVLQKIGIACILLLTSLALYNDLSRLFLAHG.

Residues 1–21 (MLTVLAFVFAIAVLIVVHELG) form a helical membrane-spanning segment. His18 serves as a coordination point for Zn(2+). Residue Glu19 is part of the active site. His22 is a Zn(2+) binding site. Residues 102–124 (FAIVAAGPVFNFLLAIALYALLA) form a helical membrane-spanning segment. In terms of domain architecture, PDZ spans 201–283 (TVRLRELPSA…MPEQNASIDI (83 aa)). 2 helical membrane-spanning segments follow: residues 386–406 (FVAF…LPVP) and 430–450 (WQAV…SLAL).

It belongs to the peptidase M50B family. The cofactor is Zn(2+).

The protein localises to the cell inner membrane. The polypeptide is Putative zinc metalloprotease RSc1411 (Ralstonia nicotianae (strain ATCC BAA-1114 / GMI1000) (Ralstonia solanacearum)).